The sequence spans 368 residues: tRNA/tmRNA (uracil-C(5))-methyltransferase (368 aa).

5 residues coordinate S-adenosyl-L-methionine: glutamine 190, tyrosine 218, asparagine 223, glutamate 239, and aspartate 301. The Nucleophile role is filled by cysteine 326. Glutamate 360 (proton acceptor) is an active-site residue.

The protein belongs to the class I-like SAM-binding methyltransferase superfamily. RNA M5U methyltransferase family. TrmA subfamily.

The enzyme catalyses uridine(54) in tRNA + S-adenosyl-L-methionine = 5-methyluridine(54) in tRNA + S-adenosyl-L-homocysteine + H(+). The catalysed reaction is uridine(341) in tmRNA + S-adenosyl-L-methionine = 5-methyluridine(341) in tmRNA + S-adenosyl-L-homocysteine + H(+). Dual-specificity methyltransferase that catalyzes the formation of 5-methyluridine at position 54 (m5U54) in all tRNAs, and that of position 341 (m5U341) in tmRNA (transfer-mRNA). This is tRNA/tmRNA (uracil-C(5))-methyltransferase from Aliivibrio fischeri (strain MJ11) (Vibrio fischeri).